The sequence spans 347 residues: Phenylalanine--tRNA ligase alpha subunit (347 aa).

Residue Glu265 participates in Mg(2+) binding.

This sequence belongs to the class-II aminoacyl-tRNA synthetase family. Phe-tRNA synthetase alpha subunit type 1 subfamily. In terms of assembly, tetramer of two alpha and two beta subunits. Mg(2+) is required as a cofactor.

The protein resides in the cytoplasm. It carries out the reaction tRNA(Phe) + L-phenylalanine + ATP = L-phenylalanyl-tRNA(Phe) + AMP + diphosphate + H(+). This Mycolicibacterium gilvum (strain PYR-GCK) (Mycobacterium gilvum (strain PYR-GCK)) protein is Phenylalanine--tRNA ligase alpha subunit.